We begin with the raw amino-acid sequence, 330 residues long: GTPase Obg (330 aa).

Residues 1 to 159 (MQFIDQARIT…WPLQLELKLL (159 aa)) enclose the Obg domain. Positions 160–328 (AEVGIIGLPN…LLERVWKELG (169 aa)) constitute an OBG-type G domain. ATP contacts are provided by residues 166–173 (GLPNAGKS), 191–195 (FTTLV), 213–216 (DIPG), 280–283 (NKQE), and 309–311 (SAA). Mg(2+)-binding residues include Ser173 and Thr193.

It belongs to the TRAFAC class OBG-HflX-like GTPase superfamily. OBG GTPase family. Monomer. It depends on Mg(2+) as a cofactor.

The protein resides in the cytoplasm. Its function is as follows. An essential GTPase which binds GTP, GDP and possibly (p)ppGpp with moderate affinity, with high nucleotide exchange rates and a fairly low GTP hydrolysis rate. Plays a role in control of the cell cycle, stress response, ribosome biogenesis and in those bacteria that undergo differentiation, in morphogenesis control. The protein is GTPase Obg of Parasynechococcus marenigrum (strain WH8102).